The chain runs to 569 residues: Archaeosine synthase (569 aa).

The PUA domain occupies 495–569 (SGGKDINYIE…ALVNIRNVKS (75 aa)).

Belongs to the archaeosine synthase type 1 family. Homodimer.

The enzyme catalyses 7-cyano-7-carbaguanosine(15) in tRNA + L-glutamine + H2O = archaeosine(15) in tRNA + L-glutamate. Its pathway is tRNA modification; archaeosine-tRNA biosynthesis. In terms of biological role, is responsible for the final step in the biosynthesis of archaeosine, a modified nucleoside present in the dihydrouridine loop (D-loop) of archaeal tRNA. Catalyzes the conversion of 7-cyano-7-deazaguanine (preQ0)-modified tRNA to archaeosine-tRNA, transforming a nitrile group to a formamidine group. Can use either glutamine, asparagine or ammonium as amino donor. The sequence is that of Archaeosine synthase from Methanocaldococcus jannaschii (strain ATCC 43067 / DSM 2661 / JAL-1 / JCM 10045 / NBRC 100440) (Methanococcus jannaschii).